The sequence spans 476 residues: Beta-xylosidase (476 aa).

Catalysis depends on Glu188, which acts as the Proton donor. Glu292 (nucleophile) is an active-site residue. Asn468 carries N-linked (GlcNAc...) asparagine glycosylation.

Belongs to the glycosyl hydrolase 5 (cellulase A) family.

It is found in the secreted. The catalysed reaction is Hydrolysis of (1-&gt;4)-beta-D-xylans, to remove successive D-xylose residues from the non-reducing termini.. Its function is as follows. Catalyzes the hydrolysis of xylo-oligomers to xylose units and plays an important role in xylan degradation. Can also perform the transglycosylation of xylose and alcohol. Has no endoglucanase activity. In Phanerodontia chrysosporium (White-rot fungus), this protein is Beta-xylosidase.